Consider the following 441-residue polypeptide: MKGLYIKSYGCQMNVYDSLIMENIIKPLGFTVVSEPSEADVVILNTCHIREKASEKLYSELGKIRKIQENKDLTIVVAGCVAQAEGEEIFERSPFVDIVVGPQSIHTLPELLVKAHRIKKQVINIDFPVISKFDAIPVEEYTKNQETSAFISVQEGCNKFCTFCVVPYTRGEEYSRTVEAIFNEALVLADSGIKEITLIGQNVNAYHGTYKGCEWDLGKLIQHIAKIPNIERIRYTTSHPRDMHQSLYEAHKLEEKLMPFVHLPVQSGSDRILKKMNRKHTAEEYIDIISHLRKQRPDIAFSSDFIVGFPGETEEDFENTIKLVEKVKFSQAYSFKYSPRPGTPGAEYPNQVPEEIKSERLLRLQKLLREQQLAFNRSMIGETCTVLFSSKKGKFDNQIIGKTAYMQSCYINTDNPSQFYNSISPIKIIDAHQNSLTGVVC.

In terms of domain architecture, MTTase N-terminal spans 2-117 (KGLYIKSYGC…LPELLVKAHR (116 aa)). Positions 11, 47, 80, 157, 161, and 164 each coordinate [4Fe-4S] cluster. Residues 143-374 (KNQETSAFIS…QKLLREQQLA (232 aa)) form the Radical SAM core domain.

Belongs to the methylthiotransferase family. MiaB subfamily. Monomer. Requires [4Fe-4S] cluster as cofactor.

Its subcellular location is the cytoplasm. It catalyses the reaction N(6)-dimethylallyladenosine(37) in tRNA + (sulfur carrier)-SH + AH2 + 2 S-adenosyl-L-methionine = 2-methylsulfanyl-N(6)-dimethylallyladenosine(37) in tRNA + (sulfur carrier)-H + 5'-deoxyadenosine + L-methionine + A + S-adenosyl-L-homocysteine + 2 H(+). In terms of biological role, catalyzes the methylthiolation of N6-(dimethylallyl)adenosine (i(6)A), leading to the formation of 2-methylthio-N6-(dimethylallyl)adenosine (ms(2)i(6)A) at position 37 in tRNAs that read codons beginning with uridine. This Ehrlichia canis (strain Jake) protein is tRNA-2-methylthio-N(6)-dimethylallyladenosine synthase.